A 469-amino-acid chain; its full sequence is Endoplasmic reticulum oxidoreductin-1 (469 aa).

The signal sequence occupies residues 1–36; it reads MGKGAIKEEESEKKRKTWRWPLATLVVVFLAVAVSS. Cystine bridges form between C52–C71, C54–C69, C108–C372, C117–C122, C222–C231, and C375–C378. Positions 201, 203, and 214 each coordinate FAD. Residues S242, H245, R275, and R282 each coordinate FAD. The N-linked (GlcNAc...) asparagine glycan is linked to N365.

Belongs to the EROs family. As to quaternary structure, may function both as a monomer and a homodimer. FAD serves as cofactor. Post-translationally, N-glycosylated.

The protein localises to the endoplasmic reticulum membrane. Essential oxidoreductase that oxidizes proteins in the endoplasmic reticulum to produce disulfide bonds. Acts by oxidizing directly PDI isomerase through a direct disulfide exchange. Does not act as a direct oxidant of folding substrate, but relies on PDI to transfer oxidizing equivalent. Does not oxidize all PDI related proteins, suggesting that it can discriminate between PDI and related proteins. Its reoxidation probably involves electron transfer to molecular oxygen via FAD. Acts independently of glutathione. May be responsible for a significant proportion of reactive oxygen species (ROS) in the cell, thereby being a source of oxidative stress. The chain is Endoplasmic reticulum oxidoreductin-1 (AERO1) from Arabidopsis thaliana (Mouse-ear cress).